Reading from the N-terminus, the 463-residue chain is Heterogeneous nuclear ribonucleoprotein K (463 aa).

At M1 the chain carries N-acetylmethionine. Positions 1–37 are disordered; it reads METEQPEETFPNTETNGEFGKRPAEDMEEEQAFKRSR. The segment at 1–276 is necessary for interaction with DDX1; sequence METEQPEETF…GRGGRPMPPS (276 aa). Basic and acidic residues predominate over residues 19-37; the sequence is FGKRPAEDMEEEQAFKRSR. The residue at position 34 (K34) is an N6-acetyllysine; alternate. K34 is covalently cross-linked (Glycyl lysine isopeptide (Lys-Gly) (interchain with G-Cter in SUMO1); alternate). A Glycyl lysine isopeptide (Lys-Gly) (interchain with G-Cter in SUMO2); alternate cross-link involves residue K34. Positions 35 to 197 are interaction with ASFV p30; sequence RSRNTDEMVE…STDRVVLIGG (163 aa). S36 carries the post-translational modification Phosphoserine. Residue T39 is modified to Phosphothreonine. Residues 42 to 104 form the KH 1 domain; the sequence is MVELRILLQS…ETIGEILKKI (63 aa). Glycyl lysine isopeptide (Lys-Gly) (interchain with G-Cter in SUMO2) cross-links involve residues K52 and K60. Repeat copies occupy residues 54-76 and 59-62. The segment at 54–421 is 2 X 22 AA approximate repeats; sequence AGAVIGKGGK…QIRHESGASI (368 aa). The segment at 59–407 is 5 X 4 AA repeats of G-X-G-G; it reads GKGGKNIKAL…LAGSIIGKGG (349 aa). Phosphoserine is present on residues S75 and S116. Residues 144–209 form the KH 2 domain; the sequence is DCELRLLIHQ…DRVVECIKII (66 aa). K163 participates in a covalent cross-link: Glycyl lysine isopeptide (Lys-Gly) (interchain with G-Cter in SUMO1); alternate. K163 participates in a covalent cross-link: Glycyl lysine isopeptide (Lys-Gly) (interchain with G-Cter in SUMO2); alternate. Position 198 is an N6-acetyllysine (K198). The tract at residues 209 to 337 is interaction with ZIK1; the sequence is ILDLISESPI…RPGDRYDGMV (129 aa). S214 and S216 each carry phosphoserine. K219 participates in a covalent cross-link: Glycyl lysine isopeptide (Lys-Gly) (interchain with G-Cter in SUMO2); alternate. Residue K219 is modified to N6-succinyllysine; alternate. The RNA-binding RGG-box stretch occupies residues 236-273; the sequence is YGGFTMMFDDRRGRPVGFPMRGRGGFDRMPPGRGGRPM. Repeat copies occupy residues 245 to 250, 257 to 260, and 267 to 270. A 2 X 6 AA approximate repeats region spans residues 245–329; that stretch reads DRRGRPVGFP…LMAYDRRGRP (85 aa). The segment at 250–329 is disordered; it reads PVGFPMRGRG…LMAYDRRGRP (80 aa). Low complexity predominate over residues 252–266; sequence GFPMRGRGGFDRMPP. A compositionally biased stretch (basic and acidic residues) spans 276-285; that stretch reads SRRDYDDMSP. S284 is subject to Phosphoserine. The stretch at 295 to 298 is one 3-4 repeat; sequence GRGG. R316 carries the omega-N-methylarginine modification. The 2-2 repeat unit spans residues 324–329; sequence DRRGRP. An Omega-N-methylarginine modification is found at R377. S379 carries the post-translational modification Phosphoserine. Y380 is modified (phosphotyrosine). Positions 387 to 451 constitute a KH 3 domain; the sequence is IITTQVTIPK…DQIQNAQYLL (65 aa). Repeat copies occupy residues 399 to 421 and 404 to 407. K405 bears the N6-acetyllysine; alternate mark. K405 is covalently cross-linked (Glycyl lysine isopeptide (Lys-Gly) (interchain with G-Cter in SUMO2); alternate). Position 420 is a phosphoserine (S420). K422 participates in a covalent cross-link: Glycyl lysine isopeptide (Lys-Gly) (interchain with G-Cter in SUMO1); alternate. A Glycyl lysine isopeptide (Lys-Gly) (interchain with G-Cter in SUMO2); alternate cross-link involves residue K422. K422 participates in a covalent cross-link: Glycyl lysine isopeptide (Lys-Gly) (interchain with G-Cter in SUMO); alternate.

As to quaternary structure, identified in the spliceosome C complex. Part of a transcription inhibitory ribonucleoprotein complex composed at least of the circular RNA circZNF827, ZNF827 and HNRNPL. Interacts with RBM42 and ZIK1. Interacts with BRDT. Interacts with ANKRD28. Interacts with ASFV p30 protein. Interacts with DDX1. Interacts with MDM2; this interaction leads to ubiquitination and proteasomal degradation. Interacts with p53/TP53. Interacts with IVNS1ABP (via BACK domain); the interaction is direct. Interacts with PPIA/CYPA. (Microbial infection) Interacts with HCV core protein. Post-translationally, arg-296 and Arg-299 are dimethylated, probably to asymmetric dimethylarginine. Sumoylated by CBX4. Sumoylation is increased upon DNA damage, such as that produced by doxorubicin, etoposide, UV light and camptothecin, due to enhanced CBX4 phosphorylation by HIPK2 under these conditions. In terms of processing, ubiquitinated by MDM2. Doxorubicin treatment does not affect monoubiquitination, but slightly decreases HNRNPK poly-ubiquitination. Post-translationally, O-glycosylated (O-GlcNAcylated), in a cell cycle-dependent manner.

Its subcellular location is the cytoplasm. The protein resides in the nucleus. It is found in the nucleoplasm. The protein localises to the cell projection. It localises to the podosome. Functionally, one of the major pre-mRNA-binding proteins. Binds tenaciously to poly(C) sequences. Likely to play a role in the nuclear metabolism of hnRNAs, particularly for pre-mRNAs that contain cytidine-rich sequences. Can also bind poly(C) single-stranded DNA. Plays an important role in p53/TP53 response to DNA damage, acting at the level of both transcription activation and repression. When sumoylated, acts as a transcriptional coactivator of p53/TP53, playing a role in p21/CDKN1A and 14-3-3 sigma/SFN induction. As far as transcription repression is concerned, acts by interacting with long intergenic RNA p21 (lincRNA-p21), a non-coding RNA induced by p53/TP53. This interaction is necessary for the induction of apoptosis, but not cell cycle arrest. As part of a ribonucleoprotein complex composed at least of ZNF827, HNRNPL and the circular RNA circZNF827 that nucleates the complex on chromatin, may negatively regulate the transcription of genes involved in neuronal differentiation. This chain is Heterogeneous nuclear ribonucleoprotein K (HNRNPK), found in Homo sapiens (Human).